Consider the following 407-residue polypeptide: Serine/threonine transporter SstT (407 aa).

Helical transmembrane passes span 12–32 (GNLI…GISS), 42–62 (LGIL…FILI), 81–101 (IIIL…LANF), 141–161 (ALSS…GIAL), 179–199 (VLKI…GLVA), 218–238 (ILLV…IVFF), 245–267 (FPLI…SSAA), 288–308 (ISIP…IAIL), and 330–350 (IIAT…LLLI).

The protein belongs to the dicarboxylate/amino acid:cation symporter (DAACS) (TC 2.A.23) family.

It localises to the cell inner membrane. It catalyses the reaction L-serine(in) + Na(+)(in) = L-serine(out) + Na(+)(out). It carries out the reaction L-threonine(in) + Na(+)(in) = L-threonine(out) + Na(+)(out). Involved in the import of serine and threonine into the cell, with the concomitant import of sodium (symport system). This chain is Serine/threonine transporter SstT, found in Campylobacter jejuni subsp. jejuni serotype O:2 (strain ATCC 700819 / NCTC 11168).